We begin with the raw amino-acid sequence, 102 residues long: Urease subunit beta (102 aa).

It belongs to the urease beta subunit family. As to quaternary structure, heterotrimer of UreA (gamma), UreB (beta) and UreC (alpha) subunits. Three heterotrimers associate to form the active enzyme.

The protein localises to the cytoplasm. The enzyme catalyses urea + 2 H2O + H(+) = hydrogencarbonate + 2 NH4(+). It functions in the pathway nitrogen metabolism; urea degradation; CO(2) and NH(3) from urea (urease route): step 1/1. The polypeptide is Urease subunit beta (Acinetobacter baylyi (strain ATCC 33305 / BD413 / ADP1)).